A 354-amino-acid polypeptide reads, in one-letter code: Lariat debranching enzyme (354 aa).

Cys-14, His-16, and Asp-45 together coordinate a divalent metal cation. RNA-binding residues include Lys-59, Asn-90, His-91, Lys-134, and His-156. Asn-90 is an a divalent metal cation binding site. The tract at residues 130–158 (SGIYKSFDEKKPYTYPPSPNDVVSLFHTR) is lariat recognition loop. His-180 lines the a divalent metal cation pocket. Gly-201, Asp-205, His-230, Met-231, and His-232 together coordinate RNA. His-230 lines the a divalent metal cation pocket. His-232 provides a ligand contact to a divalent metal cation.

It belongs to the lariat debranching enzyme family. The cofactor is Fe(2+). It depends on Zn(2+) as a cofactor. Mn(2+) is required as a cofactor.

The protein localises to the cytoplasm. It localises to the perinuclear region. With respect to regulation, active in presence of diverse metals including Fe(2+), Zn(2+) and Mn(2+). Binds two metal cations in two adjacent alpha and beta metal-binding pockets. The activity is the highest with Fe(2+) bound to the 2 metal-binding sites. The activity is slightly lower with Fe(2+) bound to the beta site and Zn(2+) to the alpha site and decreases further when only Zn(2+) is bound. No activity with Mn(2+). However, another study showed activity with Mn(2+) bound to the beta site and Zn(2+) to the alpha site. Mn(2+) appears unable to bind to the alpha site. Cleaves the 2'-5' phosphodiester linkage at the branch point of excised lariat intron RNA and converts them into linear molecules that can be subsequently degraded, thereby facilitating ribonucleotide turnover. The chain is Lariat debranching enzyme from Entamoeba histolytica (strain ATCC 30459 / HM-1:IMSS / ABRM).